A 329-amino-acid polypeptide reads, in one-letter code: Malate dehydrogenase (329 aa).

12-18 contacts NAD(+); sequence GAAGQIG. The substrate site is built by Arg95 and Arg101. NAD(+)-binding positions include Asn108, Gln115, and 132 to 134; that span reads VGN. Asn134 and Arg165 together coordinate substrate. The Proton acceptor role is filled by His190.

This sequence belongs to the LDH/MDH superfamily. MDH type 2 family.

It carries out the reaction (S)-malate + NAD(+) = oxaloacetate + NADH + H(+). Catalyzes the reversible oxidation of malate to oxaloacetate. The chain is Malate dehydrogenase from Herminiimonas arsenicoxydans.